We begin with the raw amino-acid sequence, 172 residues long: MELDLTSIAPELQEELNRNVMFTTLETVKGWVRSNSLWPLTFGLACCAIEMMGTGGARYDLDRFGVIFRASPRQSDVMIVAGTVTKKMAPLLRRLYDQMPEPKWVIAMGSCATAGGPYVRSYSVVKGVDQIVPVDVYIPGCPPNPAALIYGINKLQEKIRYEAKTGKQVTNL.

The [4Fe-4S] cluster site is built by cysteine 46, cysteine 47, cysteine 111, and cysteine 141.

This sequence belongs to the complex I 20 kDa subunit family. As to quaternary structure, NDH-1 is composed of 14 different subunits. Subunits NuoB, C, D, E, F, and G constitute the peripheral sector of the complex. It depends on [4Fe-4S] cluster as a cofactor.

The protein localises to the cell membrane. It carries out the reaction a quinone + NADH + 5 H(+)(in) = a quinol + NAD(+) + 4 H(+)(out). Functionally, NDH-1 shuttles electrons from NADH, via FMN and iron-sulfur (Fe-S) centers, to quinones in the respiratory chain. The immediate electron acceptor for the enzyme in this species is believed to be a menaquinone. Couples the redox reaction to proton translocation (for every two electrons transferred, four hydrogen ions are translocated across the cytoplasmic membrane), and thus conserves the redox energy in a proton gradient. The polypeptide is NADH-quinone oxidoreductase subunit B (Brevibacillus brevis (strain 47 / JCM 6285 / NBRC 100599)).